The following is a 194-amino-acid chain: Probable RNA polymerase sigma factor HI_1459 (194 aa).

Residues 45-58 (DLVQEAFLSAFKNL) carry the Polymerase core binding motif. The H-T-H motif DNA-binding region spans 161 to 180 (SEEICQETHLTSSNLHTTLY).

Belongs to the sigma-70 factor family. ECF subfamily.

The sequence is that of Probable RNA polymerase sigma factor HI_1459 from Haemophilus influenzae (strain ATCC 51907 / DSM 11121 / KW20 / Rd).